We begin with the raw amino-acid sequence, 231 residues long: LexA repressor (231 aa).

A DNA-binding region (H-T-H motif) is located at residues 28-48 (IREIGEALDIRSTNGVNDHLK). Catalysis depends on for autocatalytic cleavage activity residues S149 and K186.

This sequence belongs to the peptidase S24 family. In terms of assembly, homodimer.

The enzyme catalyses Hydrolysis of Ala-|-Gly bond in repressor LexA.. Represses a number of genes involved in the response to DNA damage (SOS response), including recA and lexA. In the presence of single-stranded DNA, RecA interacts with LexA causing an autocatalytic cleavage which disrupts the DNA-binding part of LexA, leading to derepression of the SOS regulon and eventually DNA repair. This chain is LexA repressor, found in Anaeromyxobacter sp. (strain Fw109-5).